We begin with the raw amino-acid sequence, 415 residues long: Camphor 5-monooxygenase (415 aa).

Cys358 contacts heme.

Belongs to the cytochrome P450 family. Requires heme as cofactor.

The protein localises to the cytoplasm. It catalyses the reaction 2 reduced [2Fe-2S]-[putidaredoxin] + (1R,4R)-camphor + O2 + 2 H(+) = (1R,4R,5R)-5-hydroxycamphor + 2 oxidized [2Fe-2S]-[putidaredoxin] + H2O. The protein operates within terpene metabolism; (R)-camphor degradation. Involved in a camphor oxidation system. This is Camphor 5-monooxygenase (camC) from Pseudomonas putida (Arthrobacter siderocapsulatus).